The primary structure comprises 165 residues: Ecotin-like protein 4 (165 aa).

The protein belongs to the protease inhibitor I11 (ecotin) family.

This is Ecotin-like protein 4 from Trypanosoma brucei brucei (strain 927/4 GUTat10.1).